A 460-amino-acid polypeptide reads, in one-letter code: CWF19-like protein 2 homolog (460 aa).

Disordered regions lie at residues 38–78 (GKTF…EDEK), 103–175 (KLES…TGTA), and 193–227 (RRHD…ESIK). Polar residues predominate over residues 54–68 (GSQQVRNDVMKSSDS). Residues 84–106 (KILKAEMKGDTDLVKKLKRKLES) are a coiled coil. Composition is skewed to basic and acidic residues over residues 113–131 (EPPK…DREG), 139–172 (RRSD…EEKT), and 205–227 (EMQK…ESIK). Residues 210 to 231 (KKKSDEKDKKRKEKESIKEHKR) adopt a coiled-coil conformation.

It belongs to the CWF19 family.

The protein is CWF19-like protein 2 homolog of Caenorhabditis elegans.